Consider the following 469-residue polypeptide: Cysteine--tRNA ligase (469 aa).

Cys-29 is a Zn(2+) binding site. The 'HIGH' region motif lies at 31 to 41; the sequence is PTVYNYIHIGN. Zn(2+)-binding residues include Cys-210, His-235, and Glu-239. Residues 267-271 carry the 'KMSKS' region motif; it reads KMSKS. Position 270 (Lys-270) interacts with ATP.

The protein belongs to the class-I aminoacyl-tRNA synthetase family. Monomer. The cofactor is Zn(2+).

It localises to the cytoplasm. It carries out the reaction tRNA(Cys) + L-cysteine + ATP = L-cysteinyl-tRNA(Cys) + AMP + diphosphate. The sequence is that of Cysteine--tRNA ligase from Thermosipho melanesiensis (strain DSM 12029 / CIP 104789 / BI429).